A 335-amino-acid polypeptide reads, in one-letter code: Putative type I specificity subunit S.MpnORF89P (335 aa).

This sequence belongs to the type-I restriction system S methylase family. The methyltransferase is composed of M and S polypeptides.

In terms of biological role, the specificity (S) subunit of a type I methyltransferase (MTase); this subunit dictates DNA sequence specificity. The single R subunit has multiple frameshifts and is probably not expressed. The protein is Putative type I specificity subunit S.MpnORF89P of Mycoplasma pneumoniae (strain ATCC 29342 / M129 / Subtype 1) (Mycoplasmoides pneumoniae).